We begin with the raw amino-acid sequence, 154 residues long: Ribonuclease H (154 aa).

Positions 1-142 (MLKQITLYTD…CDELARNAAL (142 aa)) constitute an RNase H type-1 domain. The Mg(2+) site is built by aspartate 10, glutamate 48, aspartate 70, and aspartate 134.

Belongs to the RNase H family. Monomer. Mg(2+) serves as cofactor.

The protein localises to the cytoplasm. The catalysed reaction is Endonucleolytic cleavage to 5'-phosphomonoester.. In terms of biological role, endonuclease that specifically degrades the RNA of RNA-DNA hybrids. This is Ribonuclease H from Tolumonas auensis (strain DSM 9187 / NBRC 110442 / TA 4).